Reading from the N-terminus, the 1481-residue chain is ABC multidrug transporter atrH (1481 aa).

Basic and acidic residues predominate over residues 1 to 10 (MALPREERSL). Disordered regions lie at residues 1–45 (MALP…GIEQ) and 61–89 (ISQT…SDQF). Residues Asn19, Asn76, and Asn320 are each glycosylated (N-linked (GlcNAc...) asparagine). The ABC transporter 1 domain maps to 134–396 (ATVSNVWLKA…FIEMGFDCPE (263 aa)). A helical transmembrane segment spans residues 507 to 527 (MTLSTVIGNSILALIISSVFY). Asn530 carries N-linked (GlcNAc...) asparagine glycosylation. 5 consecutive transmembrane segments (helical) span residues 542–562 (LLFF…LTLW), 587–607 (LIVD…ILYF), 616–636 (GHFF…SNVF), 650–670 (EVPA…TIPV), and 758–778 (FGIL…ASEL). The ABC transporter 2 domain maps to 838–1081 (FHWQDVCYDI…LIKYFEDKGS (244 aa)). 874–881 (GVTGAGKT) contributes to the ATP binding site. A run of 6 helical transmembrane segments spans residues 1174 to 1194 (YIYA…FTFW), 1210 to 1230 (IFML…YFAM), 1249 to 1269 (AFML…AVPA), 1298 to 1318 (LLVL…IAGI), 1327 to 1347 (IAQL…SPDV), and 1358 to 1378 (ASPF…GAPV). An N-linked (GlcNAc...) asparagine glycan is attached at Asn1395. The chain crosses the membrane as a helical span at residues 1446-1466 (VGILFVYIVFNTVAAVFLYWL).

The protein belongs to the ABC transporter superfamily. ABCG family. PDR (TC 3.A.1.205) subfamily.

The protein resides in the cell membrane. In terms of biological role, pleiotropic ABC efflux transporter involved in the basal level of azole susceptibility. The protein is ABC multidrug transporter atrH of Aspergillus oryzae (strain ATCC 42149 / RIB 40) (Yellow koji mold).